Reading from the N-terminus, the 207-residue chain is MSRYRGPRLRIIRRLQNLPGLTNKLVESKKNKVSGSDQSIQKKVSQYGIRLEAKQRLRFNYGLTERQLLNYVRIARCAKGSTGQILLQLLEMRLDNILFRLGFVPTIPSARQLINHRHILVNNRIVDVPSFHCKPKDIITIGSPKTYQSILTKRIESFAKDQVPEHLTLSLSEPKKPKGFVNYLINRESIGLKINELLVVEYYSRKA.

The region spanning 92 to 150 (MRLDNILFRLGFVPTIPSARQLINHRHILVNNRIVDVPSFHCKPKDIITIGSPKTYQSI) is the S4 RNA-binding domain.

It belongs to the universal ribosomal protein uS4 family. As to quaternary structure, part of the 30S ribosomal subunit. Contacts protein S5. The interaction surface between S4 and S5 is involved in control of translational fidelity.

Its subcellular location is the plastid. The protein resides in the chloroplast. Functionally, one of the primary rRNA binding proteins, it binds directly to 16S rRNA where it nucleates assembly of the body of the 30S subunit. With S5 and S12 plays an important role in translational accuracy. The chain is Small ribosomal subunit protein uS4c (rps4) from Equisetum variegatum (Variegated horsetail).